The primary structure comprises 217 residues: Octanoyltransferase (217 aa).

Positions 34–216 (SETRDELWLL…AASRASRHDR (183 aa)) constitute a BPL/LPL catalytic domain. Residues 73 to 80 (RGGQVTWH), 140 to 142 (ALG), and 153 to 155 (GLS) each bind substrate. Cys171 functions as the Acyl-thioester intermediate in the catalytic mechanism.

Belongs to the LipB family.

The protein resides in the cytoplasm. The enzyme catalyses octanoyl-[ACP] + L-lysyl-[protein] = N(6)-octanoyl-L-lysyl-[protein] + holo-[ACP] + H(+). Its pathway is protein modification; protein lipoylation via endogenous pathway; protein N(6)-(lipoyl)lysine from octanoyl-[acyl-carrier-protein]: step 1/2. Catalyzes the transfer of endogenously produced octanoic acid from octanoyl-acyl-carrier-protein onto the lipoyl domains of lipoate-dependent enzymes. Lipoyl-ACP can also act as a substrate although octanoyl-ACP is likely to be the physiological substrate. This chain is Octanoyltransferase, found in Halorhodospira halophila (strain DSM 244 / SL1) (Ectothiorhodospira halophila (strain DSM 244 / SL1)).